The primary structure comprises 359 residues: Alpha-N-acetylneuraminide alpha-2,8-sialyltransferase (359 aa).

Topologically, residues 1–28 (MWGRWRGAGGRRGVAQPVIPQMKLLGGR) are cytoplasmic. The helical; Signal-anchor for type II membrane protein transmembrane segment at 29–49 (VPLGASALGLLIVCWFYIFPG) threads the bilayer. The Lumenal portion of the chain corresponds to 50 to 359 (GERLPGHKEM…KKDVSSKKPH (310 aa)). N-linked (GlcNAc...) asparagine glycosylation is found at N73 and N121. 2 disulfide bridges follow: C140-C289 and C154-C349. The CMP-N-acetyl-beta-neuraminate site is built by N145 and N168. The N-linked (GlcNAc...) asparagine glycan is linked to N247. CMP-N-acetyl-beta-neuraminate is bound by residues S276, T277, G278, W298, and H312. The active-site Proton donor/acceptor is H324.

This sequence belongs to the glycosyltransferase 29 family. Expressed in the dorsal blastopore lip and in the presumptive neuroectoderm in stage 11 embryos. During gastrulation, strongly expressed in the involuting mesoderm. At stages 13 and 16, expressed in the neural plate and neural fold, paraxial mesoderm and notochord. At stages 19 and 22 (neural tube and early tailbud), strongly expressed in the neural tube and notochord. At the tadpole stage, expressed in the head region, branchial arches and otic and optic primordia. Also localized in the notochord and weakly expressed in the somites. In adults, expressed in the brain and ovary. Isoform 2 (short) is expressed at a low level in the adult testis and muscle, and at a high level in the skin. Isoform 1 (long) is expressed at a high level in the adult lung and kidney. Both isoforms 1 and 2 are expressed in the gut and liver.

It localises to the golgi apparatus membrane. The enzyme catalyses an N-acetyl-alpha-neuraminyl-(2-&gt;3)-beta-D-galactosyl derivative + CMP-N-acetyl-beta-neuraminate = an N-acetyl-alpha-neuraminyl-(2-&gt;8)-N-acetyl-alpha-neuraminyl-(2-&gt;3)-beta-D-galactosyl derivative + CMP + H(+). The catalysed reaction is a ganglioside GM3 (d18:1(4E)) + CMP-N-acetyl-beta-neuraminate = a ganglioside GD3 (d18:1(4E)) + CMP + H(+). It catalyses the reaction a ganglioside GD3 (d18:1(4E)) + CMP-N-acetyl-beta-neuraminate = a ganglioside GT3 (d18:1(4E)) + CMP + H(+). It carries out the reaction a ganglioside GD1a (d18:1(4E)) + CMP-N-acetyl-beta-neuraminate = a ganglioside GT1a (d18:1(4E)) + CMP + H(+). The enzyme catalyses a ganglioside GT1b (d18:1(4E)) + CMP-N-acetyl-beta-neuraminate = a ganglioside GQ1b (d18:1(4E)) + CMP + H(+). The catalysed reaction is a ganglioside GM1b (d18:1(4E)) + CMP-N-acetyl-beta-neuraminate = a ganglioside GD1c (d18:1(4E)) + CMP + H(+). It catalyses the reaction a ganglioside GD3 + CMP-N-acetyl-beta-neuraminate = a ganglioside GT3 + CMP + H(+). It carries out the reaction [alpha-N-acetylneuraminyl-(2-&gt;8)](n)-alpha-N-acetylneuraminyl-(2-&gt;8)-alpha-N-acetylneuraminyl-(2-&gt;3)-beta-D-galactosyl-(1-&gt;4)-beta-D-glucosyl-(1&lt;-&gt;1)-ceramide + CMP-N-acetyl-beta-neuraminate = [alpha-N-acetylneuraminyl-(2-&gt;8)](n+1)-alpha-N-acetylneuraminyl-(2-&gt;8)-alpha-N-acetylneuraminyl-(2-&gt;3)-beta-D-galactosyl-(1-&gt;4)-beta-D-glucosyl-(1&lt;-&gt;1)-ceramide + CMP + H(+). The protein operates within protein modification; protein glycosylation. Its pathway is lipid metabolism; sphingolipid metabolism. In terms of biological role, catalyzes the addition of sialic acid in alpha 2,8-linkage to the sialic acid moiety of the ganglioside GM3 to form ganglioside GD3; gangliosides are a subfamily of complex glycosphingolipds that contain one or more residues of sialic acid. Glycosphingolipids are required for convergence extension movements during early development. Can catalyze the addition of a second alpha-2,8- sialic acid to GD3 to form GT3. Can use GM1b, GD1a and GT1b as acceptor substrates to synthesize GD1c, GT1a and GQ1b respectively. In Xenopus laevis (African clawed frog), this protein is Alpha-N-acetylneuraminide alpha-2,8-sialyltransferase.